The chain runs to 202 residues: Dephospho-CoA kinase (202 aa).

Residues 3-200 enclose the DPCK domain; that stretch reads TIGLTGGIGS…QRYLTLAANR (198 aa). 11 to 16 provides a ligand contact to ATP; it reads GSGKSA.

Belongs to the CoaE family.

Its subcellular location is the cytoplasm. The enzyme catalyses 3'-dephospho-CoA + ATP = ADP + CoA + H(+). It participates in cofactor biosynthesis; coenzyme A biosynthesis; CoA from (R)-pantothenate: step 5/5. Its function is as follows. Catalyzes the phosphorylation of the 3'-hydroxyl group of dephosphocoenzyme A to form coenzyme A. The protein is Dephospho-CoA kinase of Thiobacillus denitrificans (strain ATCC 25259 / T1).